A 1940-amino-acid polypeptide reads, in one-letter code: MSSDTEMEVFGIAAPFLRKSEKERIEAQNQPFDAKTYCFVVDSKEEYAKGKIKSSQDGKVTVETEDNRTLVVKPEDVYAMNPPKFDRIEDMAMLTHLNEPAVLYNLKDRYTSWMIYTYSGLFCVTVNPYKWLPVYNPEVVEGYRGKKRQEAPPHIFSISDNAYQFMLTDRENQSILITGESGAGKTVNTKRVIQYFATIAATGDLAKKKDSKMKGTLEDQIISANPLLEAFGNAKTVRNDNSSRFGKFIRIHFGTTGKLASADIETYLLEKSRVTFQLKAERSYHIFYQILSNKKPELIELLLITTNPYDYPFISQGEILVASIDDAEELLATDSAIDILGFTPEEKSGLYKLTGAVMHYGNMKFKQKQREEQAEPDGTEVADKTAYLMGLNSSDLLKALCFPRVKVGNEYVTKGQTVDQVHHAVNALSKSVYEKLFLWMVTRINQQLDTKLPRQHFIGVLDIAGFEIFEYNSLEQLCINFTNEKLQQFFNHHMFVLEQEEYKKEGIEWTFIDFGMDLAACIELIEKPMGIFSILEEECMFPKATDTSFKNKLYDQHLGKSNNFQKPKVVKGRAEAHFSLIHYAGTVDYSVSGWLEKNKDPLNETVVGLYQKSSNRLLAHLYATFATADADSGKKKVAKKKGSSFQTVSALFRENLNKLMSNLRTTHPHFVRCIIPNETKTPGAMEHSLVLHQLRCNGVLEGIRICRKGFPNRILYGDFKQRYRVLNASAIPEGQFIDSKKACEKLLASIDIDHTQYKFGHTKVFFKAGLLGTLEEMRDDRLAKLITRTQAVCRGFLMRVEFQKMVQRRESIFCIQYNIRSFMNVKHWPWMKLFFKIKPLLKSAETEKEMATMKEEFQKTKDELAKSEAKRKELEEKLVTLVQEKNDLQLQVQAESENLLDAEERCDQLIKAKFQLEAKIKEVTERAEDEEEINAELTAKKRKLEDECSELKKDIDDLELTLAKVEKEKHATENKVKNLTEELSGLDETIAKLTREKKALQEAHQQALDDLQAEEDKVNSLNKTKSKLEQQVEDLESSLEQEKKLRVDLERNKRKLEGDLKLAQESILDLENDKQQLDERLKKKDFEYCQLQSKVEDEQTLGLQFQKKIKELQARIEELEEEIEAERATRAKTEKQRSDYARELEELSERLEEAGGVTSTQIELNKKREAEFLKLRRDLEEATLQHEAMVAALRKKHADSVAELGEQIDNLQRVKQKLEKEKSEFKLEIDDLSSSMESVSKSKANLEKICRTLEDQLSEARGKNEEIQRSLSELTTQKSRLQTEAGELSRQLEEKESIVSQLSRSKQAFTQQTEELKRQLEEENKAKNALAHALQSSRHDCDLLREQYEEEQEGKAELQRALSKANSEVAQWRTKYETDAIQRTEELEEAKKKLAQRLQDSEEQVEAVNAKCASLEKTKQRLQGEVEDLMVDVERANSLAAALDKKQRNFDKVLAEWKTKCEESQAELEASLKESRSLSTELFKLKNAYEEALDQLETVKRENKNLEQEIADLTEQIAENGKTIHELEKSRKQIELEKADIQLALEEAEAALEHEEAKILRIQLELTQVKSEIDRKIAEKDEEIEQLKRNYQRTVETMQSALDAEVRSRNEAIRLKKKMEGDLNEIEIQLSHANRQAAETLKHLRSVQGQLKDTQLHLDDALRGQEDLKEQLAIVERRANLLQAEVEELRATLEQTERARKLAEQELLDSNERVQLLHTQNTSLIHTKKKLETDLMQLQSEVEDASRDARNAEEKAKKAITDAAMMAEELKKEQDTSAHLERMKKNLEQTVKDLQHRLDEAEQLALKGGKKQIQKLETRIRELEFELEGEQKKNTESVKGLRKYERRVKELTYQSEEDRKNVLRLQDLVDKLQVKVKSYKRQAEEADEQANAHLTKFRKAQHELEEAEERADIAESQVNKLRAKTRDFTSSRMVVHESEE.

Residues 33–82 (DAKTYCFVVDSKEEYAKGKIKSSQDGKVTVETEDNRTLVVKPEDVYAMNP) form the Myosin N-terminal SH3-like domain. The Myosin motor domain maps to 86–779 (DRIEDMAMLT…LLGTLEEMRD (694 aa)). Lys130 carries the N6,N6,N6-trimethyllysine modification. ATP is bound at residue 179-186 (GESGAGKT). Actin-binding regions lie at residues 656 to 678 (LNKL…IPNE) and 758 to 772 (KFGH…GLLG). The IQ domain occupies 782–811 (LAKLITRTQAVCRGFLMRVEFQKMVQRRES). Positions 840 to 1933 (LLKSAETEKE…KTRDFTSSRM (1094 aa)) form a coiled coil.

It belongs to the TRAFAC class myosin-kinesin ATPase superfamily. Myosin family. Muscle myosin is a hexameric protein that consists of 2 heavy chain subunits (MHC), 2 alkali light chain subunits (MLC) and 2 regulatory light chain subunits (MLC-2). Expressed in fetal bone, thymus, placenta, heart, brain, and liver.

The protein resides in the cytoplasm. It localises to the myofibril. Muscle contraction. This is Myosin-3 (MYH3) from Homo sapiens (Human).